The chain runs to 735 residues: uncharacterized protein (735 aa).

A GAF domain is found at 25–175; that stretch reads DLSCLSPDLL…CIAAVLAGLL (151 aa). One can recognise a PAS domain in the interval 185–255; that stretch reads SEAARRAMLD…RQGFMRHLAT (71 aa). Positions 263 to 313 constitute a PAC domain; the sequence is RLVEVEALRADGSVFPAELTVNEHRAGGRRLFSAFVRDISDRITSRRALER. In terms of domain architecture, GGDEF spans 342–464; it reads GAVVLMLRDL…DGHLLHFAEH (123 aa). The EAL domain occupies 472 to 732; that stretch reads RLELEMALRD…VAGTLPETLA (261 aa).

This is an uncharacterized protein from Azorhizobium caulinodans (strain ATCC 43989 / DSM 5975 / JCM 20966 / LMG 6465 / NBRC 14845 / NCIMB 13405 / ORS 571).